Here is a 216-residue protein sequence, read N- to C-terminus: Pyrrolidone-carboxylate peptidase (216 aa).

Active-site residues include E80, C143, and H168.

It belongs to the peptidase C15 family. In terms of assembly, homotetramer.

The protein resides in the cytoplasm. The catalysed reaction is Release of an N-terminal pyroglutamyl group from a polypeptide, the second amino acid generally not being Pro.. Its function is as follows. Removes 5-oxoproline from various penultimate amino acid residues except L-proline. The sequence is that of Pyrrolidone-carboxylate peptidase from Cupriavidus taiwanensis (strain DSM 17343 / BCRC 17206 / CCUG 44338 / CIP 107171 / LMG 19424 / R1) (Ralstonia taiwanensis (strain LMG 19424)).